Reading from the N-terminus, the 302-residue chain is Glutaminase (302 aa).

Positions 61, 111, 155, 162, 186, 238, and 256 each coordinate substrate.

It belongs to the glutaminase family. In terms of assembly, homotetramer.

The catalysed reaction is L-glutamine + H2O = L-glutamate + NH4(+). This Pseudomonas putida (strain ATCC 700007 / DSM 6899 / JCM 31910 / BCRC 17059 / LMG 24140 / F1) protein is Glutaminase.